Here is a 620-residue protein sequence, read N- to C-terminus: Coenzyme F420-dependent sulfite reductase (620 aa).

The 4Fe-4S ferredoxin-type 1 domain maps to 6–35; it reads LNEIVDSGVCARCGTCTIVCPNGILTFDER. Positions 15, 18, 21, 25, 428, 434, 468, 472, 495, 498, 501, 505, 524, 527, 530, and 534 each coordinate [4Fe-4S] cluster. Siroheme is bound at residue Cys-472. 2 consecutive 4Fe-4S ferredoxin-type domains span residues 486–515 and 520–544; these read KYPK…IRGE and NYNV…VKEE.

The protein belongs to the nitrite and sulfite reductase 4Fe-4S domain family. The cofactor is [4Fe-4S] cluster. Requires siroheme as cofactor.

It catalyses the reaction 3 oxidized coenzyme F420-(gamma-L-Glu)(n) + hydrogen sulfide + 3 H2O + 2 H(+) = 3 reduced coenzyme F420-(gamma-L-Glu)(n) + sulfite. Functionally, catalyzes the reduction of sulfite to sulfide using reduced F420 as the electron source. Involved in sulfite detoxification and assimilation. Cannot use NADH or NADPH. The sequence is that of Coenzyme F420-dependent sulfite reductase from Methanocaldococcus jannaschii (strain ATCC 43067 / DSM 2661 / JAL-1 / JCM 10045 / NBRC 100440) (Methanococcus jannaschii).